The following is a 154-amino-acid chain: Superoxide dismutase [Cu-Zn] (154 aa).

The Cu cation site is built by His-47, His-49, and His-64. Cys-58 and Cys-147 are oxidised to a cystine. Zn(2+) is bound by residues His-64, His-72, His-81, and Asp-84. His-121 provides a ligand contact to Cu cation. Basic and acidic residues predominate over residues 126–137; the sequence is DLGRGGNEESKK. The tract at residues 126 to 147 is disordered; sequence DLGRGGNEESKKTGNAGPRPAC.

Belongs to the Cu-Zn superoxide dismutase family. As to quaternary structure, homodimer. Cu cation is required as a cofactor. It depends on Zn(2+) as a cofactor.

The protein localises to the cytoplasm. It catalyses the reaction 2 superoxide + 2 H(+) = H2O2 + O2. Destroys radicals which are normally produced within the cells and which are toxic to biological systems. Plays an important role in the phase transition, and may be important in vivo, as it would facilitate the intracellular survival of the fungus by providing a non-toxic environment in the macrophage phagolysosomes. This Talaromyces marneffei (Penicillium marneffei) protein is Superoxide dismutase [Cu-Zn].